The following is a 208-amino-acid chain: N-(5'-phosphoribosyl)anthranilate isomerase (208 aa).

The protein belongs to the TrpF family.

The catalysed reaction is N-(5-phospho-beta-D-ribosyl)anthranilate = 1-(2-carboxyphenylamino)-1-deoxy-D-ribulose 5-phosphate. It functions in the pathway amino-acid biosynthesis; L-tryptophan biosynthesis; L-tryptophan from chorismate: step 3/5. This chain is N-(5'-phosphoribosyl)anthranilate isomerase, found in Deinococcus radiodurans (strain ATCC 13939 / DSM 20539 / JCM 16871 / CCUG 27074 / LMG 4051 / NBRC 15346 / NCIMB 9279 / VKM B-1422 / R1).